The primary structure comprises 339 residues: MRVYYDRDADLNLIKSKKVAIIGYGSQGRAHALNLKDSGAQNVVIALKAGSPTVKKAEADGFKVMTVAEAAGWADLMMMATPDELQADIYKADIAPNIRDGAAIAFAHGLNVHFGLIEPKASVDVVMIAPKGPGHTVRGEYQKGGGVPCLVAVHQNASGNALELALSYACGVGGGRSGIIETNFREECETDLFGEQVVLCGGLVELIRAGFETLVEAGYAPEMAYFECLHEVKLIVDLIYEGGIANMNYSISNTAEWGEYVTGPRIITEETKAEMKRVLKDIQTGKFTSDWMQEYRSGAARFKGIRRMNDSHQIEEVGAKLRGMMPWIGKNKLVDKSVN.

Residues 1–182 form the KARI N-terminal Rossmann domain; it reads MRVYYDRDAD…GGGRSGIIET (182 aa). Residues 24 to 27, K48, S51, T53, and 83 to 86 each bind NADP(+); these read YGSQ and DELQ. H108 is an active-site residue. G134 serves as a coordination point for NADP(+). A KARI C-terminal knotted domain is found at 183–328; sequence NFREECETDL…AKLRGMMPWI (146 aa). Residues D191, E195, E227, and E231 each contribute to the Mg(2+) site. A substrate-binding site is contributed by S252.

Belongs to the ketol-acid reductoisomerase family. Mg(2+) is required as a cofactor.

The catalysed reaction is (2R)-2,3-dihydroxy-3-methylbutanoate + NADP(+) = (2S)-2-acetolactate + NADPH + H(+). The enzyme catalyses (2R,3R)-2,3-dihydroxy-3-methylpentanoate + NADP(+) = (S)-2-ethyl-2-hydroxy-3-oxobutanoate + NADPH + H(+). It functions in the pathway amino-acid biosynthesis; L-isoleucine biosynthesis; L-isoleucine from 2-oxobutanoate: step 2/4. The protein operates within amino-acid biosynthesis; L-valine biosynthesis; L-valine from pyruvate: step 2/4. Functionally, involved in the biosynthesis of branched-chain amino acids (BCAA). Catalyzes an alkyl-migration followed by a ketol-acid reduction of (S)-2-acetolactate (S2AL) to yield (R)-2,3-dihydroxy-isovalerate. In the isomerase reaction, S2AL is rearranged via a Mg-dependent methyl migration to produce 3-hydroxy-3-methyl-2-ketobutyrate (HMKB). In the reductase reaction, this 2-ketoacid undergoes a metal-dependent reduction by NADPH to yield (R)-2,3-dihydroxy-isovalerate. The polypeptide is Ketol-acid reductoisomerase (NADP(+)) (Rhizobium rhizogenes (strain K84 / ATCC BAA-868) (Agrobacterium radiobacter)).